Consider the following 213-residue polypeptide: High frequency lysogenization protein HflD homolog (213 aa).

The protein belongs to the HflD family.

The protein localises to the cytoplasm. It is found in the cell inner membrane. The sequence is that of High frequency lysogenization protein HflD homolog from Klebsiella pneumoniae (strain 342).